The chain runs to 128 residues: Sulfurtransferase TusD (128 aa).

The active-site Cysteine persulfide intermediate is Cys-78.

The protein belongs to the DsrE/TusD family. Heterohexamer, formed by a dimer of trimers. The hexameric TusBCD complex contains 2 copies each of TusB, TusC and TusD. The TusBCD complex interacts with TusE.

It localises to the cytoplasm. Part of a sulfur-relay system required for 2-thiolation of 5-methylaminomethyl-2-thiouridine (mnm(5)s(2)U) at tRNA wobble positions. Accepts sulfur from TusA and transfers it in turn to TusE. The polypeptide is Sulfurtransferase TusD (Cronobacter sakazakii (strain ATCC BAA-894) (Enterobacter sakazakii)).